Consider the following 859-residue polypeptide: Magnesium transporter ALR1 (859 aa).

A compositionally biased stretch (low complexity) spans 1 to 20; the sequence is MSSSSSSSESSPNLSRSNSL. 2 disordered regions span residues 1–281 and 330–399; these read MSSS…MPPQ and TSST…NIPS. An N-acetylserine modification is found at Ser2. Composition is skewed to basic and acidic residues over residues 28–42 and 55–73; these read KTEDHTGLYDHRQHP and KNKEIAKSTKPSIPKEQKS. Position 77 is a phosphotyrosine (Tyr77). Ser85 bears the Phosphoserine mark. A compositionally biased stretch (basic and acidic residues) spans 144 to 154; that stretch reads PPKDVGVKRDY. Positions 157–176 are enriched in low complexity; the sequence is SSSTASSGNKSKLSASSSAS. Phosphoserine is present on residues Ser185 and Ser188. A compositionally biased stretch (basic and acidic residues) spans 193–203; sequence IPHESKSDTHS. The span at 213–235 shows a compositional bias: polar residues; it reads YSTTSAHSSINPAVLLTKSTSQK. Phosphoserine occurs at positions 220, 221, and 236. Position 242 is a phosphothreonine (Thr242). Residues 252 to 265 are compositionally biased toward polar residues; sequence TRASFDSDVSQASR. Positions 330 to 339 are enriched in low complexity; sequence TSSTSTSGSS. Residues 353–375 are compositionally biased toward basic and acidic residues; that stretch reads EKSESTNETEIHEKKEDEHEKIK. Helical transmembrane passes span 744–764 and 773–793; these read TMIGTMLVPLNVITGLFGMNV and IAWWFGILGVLLLLAVLGWFL. Residues 830–859 form a disordered region; it reads FNDRSKNINVRAGPSNKSVASLPSRYSRYD. Ser850 is subject to Phosphoserine.

Belongs to the CorA metal ion transporter (MIT) (TC 1.A.35) family.

It localises to the cell membrane. In terms of biological role, plasma membrane magnesium transporter. In Saccharomyces cerevisiae (strain ATCC 204508 / S288c) (Baker's yeast), this protein is Magnesium transporter ALR1 (ALR1).